Consider the following 198-residue polypeptide: Putative pseudouridine methyltransferase (198 aa).

Positions 132 and 186 each coordinate S-adenosyl-L-methionine.

This sequence belongs to the methyltransferase superfamily. TrmY family.

The protein localises to the cytoplasm. The sequence is that of Putative pseudouridine methyltransferase from Shewanella frigidimarina (strain NCIMB 400).